The sequence spans 317 residues: Melanocyte-stimulating hormone receptor (317 aa).

Residues 1 to 37 (MPVQGSQRRLLGSLNSTPTATPHLGLAANQTGARCRE) lie on the Extracellular side of the membrane. A glycan (N-linked (GlcNAc...) asparagine) is linked at asparagine 29. The helical transmembrane segment at 38 to 63 (VSIPDGLFLSLGLVSLVENVLVVTAI) threads the bilayer. The Cytoplasmic portion of the chain corresponds to 64–72 (AKNRNLHSP). A helical membrane pass occupies residues 73–93 (MYCFICCLALSDLLVSGSNML). Topologically, residues 94–118 (ETAVTLLLEAGALVARAAVVQQLDN) are extracellular. The chain crosses the membrane as a helical span at residues 119 to 140 (VIDVITCSSMLSSLCFLGAIAV). At 141–163 (DRYISIFYALRYHSIVTLPRAQR) the chain is on the cytoplasmic side. Residues 164-183 (AIAAIWVASVLCSTLFIAYY) form a helical membrane-spanning segment. The Extracellular segment spans residues 184–191 (DHAAVLLC). Residues 192-211 (LVVFFLAMLVLMAVLYVHML) form a helical membrane-spanning segment. Topologically, residues 212-240 (ARACQHAQGIARLHKRQRLAHQGFGLKGA) are cytoplasmic. Residues 241–266 (ATLTILLGIFFLCWGPFFLHLTLIVL) traverse the membrane as a helical segment. The Extracellular portion of the chain corresponds to 267–279 (CPQHPTCSCIFKN). The chain crosses the membrane as a helical span at residues 280-300 (FNLFLALIICNAIIDPLIYAF). The Cytoplasmic segment spans residues 301–317 (RSQELRRTLKEVLLCSW). A lipid anchor (S-palmitoyl cysteine) is attached at cysteine 315.

Belongs to the G-protein coupled receptor 1 family. Interacts with MGRN1, but does not undergo MGRN1-mediated ubiquitination; this interaction competes with GNAS-binding and thus inhibits agonist-induced cAMP production. Interacts with OPN3; the interaction results in a decrease in MC1R-mediated cAMP signaling and ultimately a decrease in melanin production in melanocytes. Expressed in the adrenal gland.

It is found in the cell membrane. Its function is as follows. Receptor for MSH (alpha, beta and gamma) and ACTH. The activity of this receptor is mediated by G proteins which activate adenylate cyclase. Mediates melanogenesis, the production of eumelanin (black/brown) and phaeomelanin (red/yellow), via regulation of cAMP signaling in melanocytes. This Macaca mulatta (Rhesus macaque) protein is Melanocyte-stimulating hormone receptor (MC1R).